Consider the following 934-residue polypeptide: 2-oxoglutarate dehydrogenase E1 component (934 aa).

Belongs to the alpha-ketoglutarate dehydrogenase family. Homodimer. Part of the 2-oxoglutarate dehydrogenase (OGDH) complex composed of E1 (2-oxoglutarate dehydrogenase), E2 (dihydrolipoamide succinyltransferase) and E3 (dihydrolipoamide dehydrogenase); the complex contains multiple copies of the three enzymatic components (E1, E2 and E3). Thiamine diphosphate serves as cofactor.

The enzyme catalyses N(6)-[(R)-lipoyl]-L-lysyl-[protein] + 2-oxoglutarate + H(+) = N(6)-[(R)-S(8)-succinyldihydrolipoyl]-L-lysyl-[protein] + CO2. Functionally, E1 component of the 2-oxoglutarate dehydrogenase (OGDH) complex which catalyzes the decarboxylation of 2-oxoglutarate, the first step in the conversion of 2-oxoglutarate to succinyl-CoA and CO(2). The protein is 2-oxoglutarate dehydrogenase E1 component of Staphylococcus epidermidis (strain ATCC 35984 / DSM 28319 / BCRC 17069 / CCUG 31568 / BM 3577 / RP62A).